The primary structure comprises 208 residues: Ion-translocating oxidoreductase complex subunit G (208 aa).

The chain crosses the membrane as a helical span at residues Gly9–Leu29. FMN phosphoryl threonine is present on Thr174.

Belongs to the RnfG family. In terms of assembly, the complex is composed of six subunits: RnfA, RnfB, RnfC, RnfD, RnfE and RnfG. FMN serves as cofactor.

It is found in the cell inner membrane. Functionally, part of a membrane-bound complex that couples electron transfer with translocation of ions across the membrane. This is Ion-translocating oxidoreductase complex subunit G from Cronobacter sakazakii (strain ATCC BAA-894) (Enterobacter sakazakii).